The sequence spans 210 residues: Ribosomal RNA large subunit methyltransferase E (210 aa).

S-adenosyl-L-methionine contacts are provided by glycine 67, tryptophan 69, aspartate 87, aspartate 103, and aspartate 128. The active-site Proton acceptor is the lysine 168.

The protein belongs to the class I-like SAM-binding methyltransferase superfamily. RNA methyltransferase RlmE family.

It localises to the cytoplasm. The catalysed reaction is uridine(2552) in 23S rRNA + S-adenosyl-L-methionine = 2'-O-methyluridine(2552) in 23S rRNA + S-adenosyl-L-homocysteine + H(+). In terms of biological role, specifically methylates the uridine in position 2552 of 23S rRNA at the 2'-O position of the ribose in the fully assembled 50S ribosomal subunit. In Psychrobacter cryohalolentis (strain ATCC BAA-1226 / DSM 17306 / VKM B-2378 / K5), this protein is Ribosomal RNA large subunit methyltransferase E.